A 61-amino-acid polypeptide reads, in one-letter code: Myrmicitoxin(1)-Pm5a (61 aa).

An N-terminal signal peptide occupies residues 1–23 (MKAIIFLFAVLTVVAIIIPIISG). The propeptide occupies 24–33 (EPNAGPLAAS). Glutamine 60 is subject to Glutamine amide.

It belongs to the formicidae venom clade 2 family. Expressed by the venom gland.

Its subcellular location is the secreted. Toxin that causes a rapid and irreversible paralysis when intrathoracically injected into insects (blowflies). Does not cause spontaneous nocifensive behaviors by intraplantar injection in mice. The polypeptide is Myrmicitoxin(1)-Pm5a (Pogonomyrmex maricopa (Maricopa harvester ant)).